We begin with the raw amino-acid sequence, 354 residues long: Biotin synthase (354 aa).

The Radical SAM core domain maps to 41–268 (NEVQISRLLS…LSRVRLSAGR (228 aa)). Positions 56, 60, and 63 each coordinate [4Fe-4S] cluster. Cys100, Cys131, Cys191, and Arg263 together coordinate [2Fe-2S] cluster.

Belongs to the radical SAM superfamily. Biotin synthase family. In terms of assembly, homodimer. Requires [4Fe-4S] cluster as cofactor. [2Fe-2S] cluster serves as cofactor.

The enzyme catalyses (4R,5S)-dethiobiotin + (sulfur carrier)-SH + 2 reduced [2Fe-2S]-[ferredoxin] + 2 S-adenosyl-L-methionine = (sulfur carrier)-H + biotin + 2 5'-deoxyadenosine + 2 L-methionine + 2 oxidized [2Fe-2S]-[ferredoxin]. It participates in cofactor biosynthesis; biotin biosynthesis; biotin from 7,8-diaminononanoate: step 2/2. Catalyzes the conversion of dethiobiotin (DTB) to biotin by the insertion of a sulfur atom into dethiobiotin via a radical-based mechanism. The chain is Biotin synthase from Shewanella amazonensis (strain ATCC BAA-1098 / SB2B).